The sequence spans 282 residues: Benzoyl-CoA reductase subunit D (282 aa).

[4Fe-4S] cluster-binding residues include cysteine 130 and cysteine 169.

Heterotetramer composed of A, B, C, and D subunits. [4Fe-4S] cluster is required as a cofactor.

The enzyme catalyses cyclohexa-1,5-diene-1-carbonyl-CoA + oxidized 2[4Fe-4S]-[ferredoxin] + 2 ADP + 2 phosphate = reduced 2[4Fe-4S]-[ferredoxin] + benzoyl-CoA + 2 ATP + 2 H2O. It catalyses the reaction 3-hydroxybenzoyl-CoA + AH2 + 2 ATP + 2 H2O = 3-hydroxycyclohexa-1,5-diene-1-carbonyl-CoA + A + 2 ADP + 2 phosphate + 2 H(+). Functionally, catalyzes the anaerobic reduction of benzoyl-CoA and 3-hydroxybenzoyl-CoA to form cyclohexa-1,5-diene-1-carbonyl-CoA and 3-hydroxycyclohexa-1,5-diene-1-carbonyl-CoA, respectively. The enzyme also reduces other benzoyl-CoA analogs with small substituents at the aromatic ring. The protein is Benzoyl-CoA reductase subunit D (bcrD) of Thauera aromatica.